We begin with the raw amino-acid sequence, 109 residues long: Probable WRKY transcription factor 43 (109 aa).

The segment at residues 24-89 (SDADILDDGY…YEGIHNHPCE (66 aa)) is a DNA-binding region (WRKY).

This sequence belongs to the WRKY group II-c family.

Its subcellular location is the nucleus. Its function is as follows. Transcription factor. Interacts specifically with the W box (5'-(T)TGAC[CT]-3'), a frequently occurring elicitor-responsive cis-acting element. In Arabidopsis thaliana (Mouse-ear cress), this protein is Probable WRKY transcription factor 43 (WRKY43).